A 196-amino-acid polypeptide reads, in one-letter code: Putative NADH dehydrogenase/NAD(P)H nitroreductase SGR_2476 (196 aa).

It belongs to the nitroreductase family. HadB/RutE subfamily. FMN is required as a cofactor.

This Streptomyces griseus subsp. griseus (strain JCM 4626 / CBS 651.72 / NBRC 13350 / KCC S-0626 / ISP 5235) protein is Putative NADH dehydrogenase/NAD(P)H nitroreductase SGR_2476.